The sequence spans 637 residues: Tumor protein p73 (637 aa).

Positions 1 to 46 (MAQSTTTSPDGGTTFEHLWSSLEPDSTYFDLPQSSRGNNEVVGGTD) are transactivation. Residue threonine 27 is modified to Phosphothreonine. At tyrosine 28 the chain carries Phosphotyrosine; by SRC and HCK. The segment at 78–104 (RAASASPYTPEHAASVPTHSPYAQPSS) is disordered. The segment covering 94–104 (PTHSPYAQPSS) has biased composition (polar residues). Tyrosine 99 is subject to Phosphotyrosine. The segment at 131–310 (FQQSSTAKSA…DRKADEDHYR (180 aa)) is DNA-binding. Zn(2+)-binding residues include cysteine 194, histidine 197, cysteine 258, and cysteine 262. Basic and acidic residues predominate over residues 301–311 (DRKADEDHYRE). Residues 301-351 (DRKADEDHYREQQALNESSAKNGAASKRAFKQSPPAVPALGPGVKKRRHGD) form a disordered region. Positions 345–380 (KKRRHGDEDTYYLQVRGRENFEILMKLKESLELMEL) are interaction with HIPK2. An oligomerization region spans residues 345-386 (KKRRHGDEDTYYLQVRGRENFEILMKLKESLELMELVPQPLV). Positions 483–487 (PPPPY) match the PPxY motif motif. The SAM domain maps to 485-551 (PPYHADPSLV…WRGLQDLKQG (67 aa)). Lysine 628 participates in a covalent cross-link: Glycyl lysine isopeptide (Lys-Gly) (interchain with G-Cter in SUMO); in isoform Alpha. Lysine 628 participates in a covalent cross-link: Glycyl lysine isopeptide (Lys-Gly) (interchain with G-Cter in SUMO2).

This sequence belongs to the p53 family. As to quaternary structure, found in a complex with p53/TP53 and CABLES1. The C-terminal oligomerization domain binds to the ABL1 tyrosine kinase SH3 domain. Interacts with HECW2. Isoforms Alpha and Beta interact with HIPK2. Isoform Alpha interacts with RANBP9. Interacts with WWOX. Isoform Beta interacts homotypically and with p53, whereas isoform Alpha does not. Interacts (via SAM domain) with FBXO45 (via B30.2/SPRY domain). Interacts with YAP1 (phosphorylated form). Interacts with HCK (via SH3 domain); this inhibits TP73 activity and degradation. It depends on Zn(2+) as a cofactor. Post-translationally, isoform Alpha (but not isoform Beta) is sumoylated on Lys-628, which potentiates proteasomal degradation but does not affect transcriptional activity. Polyubiquitinated by RCHY1/PIRH2; leading to its degradation by the proteasome.

It is found in the nucleus. It localises to the cytoplasm. Its function is as follows. Participates in the apoptotic response to DNA damage. May be a tumor suppressor protein. Is an activator of FOXJ1 expression, essential for the positive regulation of lung ciliated cell differentiation. The protein is Tumor protein p73 (TP73) of Chlorocebus aethiops (Green monkey).